Consider the following 212-residue polypeptide: ER lumen protein-retaining receptor 2 (212 aa).

Residues 1–4 (MNVF) lie on the Lumenal side of the membrane. The chain crosses the membrane as a helical span at residues 5 to 24 (RLSGDLSHLAAIIILLLKIW). Residues 25-32 (KSRSCAGI) are Cytoplasmic-facing. A helical membrane pass occupies residues 33–52 (SGKSQLLFALVFTTRYLDLL). The interval 47–48 (RY) is interaction with the K-D-E-L motif on target proteins. At 53-58 (TSFISL) the chain is on the lumenal side. A helical transmembrane segment spans residues 59-79 (YNTSMKVIYIGCAYATVYLIY). The Cytoplasmic segment spans residues 80–92 (MKFKATYDGNHDT). A helical membrane pass occupies residues 93-110 (FRVEFLVVPVGGLSVLVN). Residues 111–116 (HDFSPL) are Lumenal-facing. Residues 117–135 (EILWTFSIYLESVAILPQL) form a helical membrane-spanning segment. The Cytoplasmic segment spans residues 136–149 (FMISKTGEAETITT). The helical transmembrane segment at 150–168 (HYLFFLGLYRALYLFNWIW) threads the bilayer. The tract at residues 159–169 (RALYLFNWIWR) is interaction with the K-D-E-L motif on target proteins. The Lumenal portion of the chain corresponds to 169–178 (RYSFEGFFDL). Residues 179 to 199 (IAIVAGVVQTILYCDFFYLYV) traverse the membrane as a helical segment. Residues 200 to 212 (TKVLKGKKLSLPA) are Cytoplasmic-facing. The tract at residues 204-207 (KGKK) is important for recycling of cargo proteins with the sequence motif K-D-E-L from the Golgi to the endoplasmic reticulum.

The protein belongs to the ERD2 family.

It localises to the endoplasmic reticulum membrane. It is found in the golgi apparatus membrane. The protein resides in the cytoplasmic vesicle. The protein localises to the COPI-coated vesicle membrane. Its function is as follows. Receptor for the C-terminal sequence motif K-D-E-L that is present on endoplasmic reticulum resident proteins and that mediates their recycling from the Golgi back to the endoplasmic reticulum. Binding is pH dependent, and is optimal at pH 5-5.4. The sequence is that of ER lumen protein-retaining receptor 2 (kdelr2) from Xenopus tropicalis (Western clawed frog).